The sequence spans 481 residues: F-box/FBD/LRR-repeat protein At5g18770 (481 aa).

An F-box domain is found at 23–69; that stretch reads EDMISALPDHLLCHILIFLSTDESVLTSVLSSRWRNLWKWVPRLDLN. LRR repeat units follow at residues 126-153, 159-185, 186-211, 214-234, 236-261, 289-314, and 340-368; these read KPNVRHFQVESDLLEHWCTSEIRLTLSA, CLKLHLVWLNDFESLSLPCLKIMYLED, VVFPSDAAAETLISCSPVLEDLKLSL, DDVVVVLRVYSQSLKSFTLKR, VPVYAINGAHTVLVDTPRLVYMSLID, DELSERNIVYDLLNNFSGVRNMTISW, and ATMSSDASLEVLRIVLESCPKLKHFHFTL. In terms of domain architecture, FBD spans 378–430; sequence VITGFSRVLPRCLVFSLESVEMESPITEKATELKLVRYFLENSATLKKLVLLL.

The polypeptide is F-box/FBD/LRR-repeat protein At5g18770 (Arabidopsis thaliana (Mouse-ear cress)).